The chain runs to 208 residues: Ribosomal RNA large subunit methyltransferase E (208 aa).

Positions 63, 65, 83, 99, and 124 each coordinate S-adenosyl-L-methionine. Catalysis depends on K164, which acts as the Proton acceptor.

This sequence belongs to the class I-like SAM-binding methyltransferase superfamily. RNA methyltransferase RlmE family.

It is found in the cytoplasm. It carries out the reaction uridine(2552) in 23S rRNA + S-adenosyl-L-methionine = 2'-O-methyluridine(2552) in 23S rRNA + S-adenosyl-L-homocysteine + H(+). In terms of biological role, specifically methylates the uridine in position 2552 of 23S rRNA at the 2'-O position of the ribose in the fully assembled 50S ribosomal subunit. This Blochmanniella pennsylvanica (strain BPEN) protein is Ribosomal RNA large subunit methyltransferase E.